Reading from the N-terminus, the 156-residue chain is MPRRREIAKRVILPDPKYKNILVAKFVNNLLKEGKKSIAESILYGAFDLIEKKAKESPVELFERAVNNVKPVIEVKSRRVGGSTYQVPTEVAASRRVALAIRWIISNAKDRAEKTMREKLAGEFIDAANNRGGSIKKRESVHKMAEANKAFAHYRF.

Belongs to the universal ribosomal protein uS7 family. As to quaternary structure, part of the 30S ribosomal subunit. Contacts proteins S9 and S11.

Its function is as follows. One of the primary rRNA binding proteins, it binds directly to 16S rRNA where it nucleates assembly of the head domain of the 30S subunit. Is located at the subunit interface close to the decoding center, probably blocks exit of the E-site tRNA. This is Small ribosomal subunit protein uS7 from Syntrophus aciditrophicus (strain SB).